We begin with the raw amino-acid sequence, 102 residues long: Putative sortase YwpE (102 aa).

Residue His17 is the Proton donor/acceptor of the active site. Cys78 functions as the Acyl-thioester intermediate in the catalytic mechanism.

The protein belongs to the bacterial sortase family.

In terms of biological role, seems not to play a major role if any as a sortase. This Bacillus subtilis (strain 168) protein is Putative sortase YwpE (ywpE).